We begin with the raw amino-acid sequence, 397 residues long: GDP-mannose transporter 1 (397 aa).

Residues 1 to 57 are disordered; sequence MSKPFVPTPNISRPATPSSLDYGKDEASSTLLRDMGERGDRERKDREERDKKEAMPS. Residues 1–61 are Cytoplasmic-facing; that stretch reads MSKPFVPTPN…KEAMPSGQDQ (61 aa). The span at 9–19 shows a compositional bias: polar residues; the sequence is PNISRPATPSS. The segment covering 34–54 has biased composition (basic and acidic residues); that stretch reads DMGERGDRERKDREERDKKEA. The chain crosses the membrane as a helical span at residues 62 to 82; it reads VLPILSYCAASIMMTVVNKYV. The Lumenal segment spans residues 83–87; it reads VSGAN. An N-linked (GlcNAc...) asparagine glycan is attached at Asn87. A helical membrane pass occupies residues 88–108; it reads FTMTFLLLAIQSSVCVLAVTT. The Cytoplasmic segment spans residues 109–124; it reads VKKLGFISFRDFDKND. The chain crosses the membrane as a helical span at residues 125 to 142; that stretch reads AKAWWPISTLLVAVIYTG. The Lumenal segment spans residues 143–145; that stretch reads SKA. A helical membrane pass occupies residues 146–168; it reads LQFLSIPVYTIFKNLTIILIAYG. Topologically, residues 169-174 are cytoplasmic; it reads EVFMFN. A helical membrane pass occupies residues 175-197; the sequence is GAVSGLTLCSFALMVGSSIIAAW. The Lumenal portion of the chain corresponds to 198–228; the sequence is SDITSVWNKEPELDPITGLEITVGPVSTIGG. The helical transmembrane segment at 229–249 threads the bilayer; the sequence is LNAGYIWMALNCFVSAAYVLF. Residues 250 to 272 lie on the Cytoplasmic side of the membrane; the sequence is MRKRIKVTGFKDWDSMYYNNLLS. A helical membrane pass occupies residues 273–293; sequence IPILVVFSLVIEDWGSESLAL. Over 294–300 the chain is Lumenal; sequence NFPASNR. A helical membrane pass occupies residues 301-321; it reads VLLLSAMAFSGAAAVFISYST. At 322–332 the chain is on the cytoplasmic side; it reads AWCVRITGSTT. A helical transmembrane segment spans residues 333–353; it reads YSMVGALNKLPVAASGILFFG. At 354-355 the chain is on the lumenal side; sequence DP. The chain crosses the membrane as a helical span at residues 356-376; the sequence is ANFGNISAIAVGGVAGVVYAV. At 377 to 397 the chain is on the cytoplasmic side; the sequence is AKTNQAKVEKARQARAAGGRP.

It belongs to the TPT transporter family. SLC35D subfamily. Homooligomer.

It localises to the golgi apparatus membrane. The protein localises to the cytoplasmic vesicle membrane. It is found in the endoplasmic reticulum membrane. Its function is as follows. Involved in the import of GDP-mannose from the cytoplasm into the Golgi lumen. Involved in capsule synthesis. The polypeptide is GDP-mannose transporter 1 (GMT1) (Cryptococcus neoformans var. neoformans serotype D (strain B-3501A) (Filobasidiella neoformans)).